The following is a 240-amino-acid chain: Ribonuclease PH (240 aa).

Residues R86 and 124-126 contribute to the phosphate site; that span reads GTR.

This sequence belongs to the RNase PH family. As to quaternary structure, homohexameric ring arranged as a trimer of dimers.

It carries out the reaction tRNA(n+1) + phosphate = tRNA(n) + a ribonucleoside 5'-diphosphate. Functionally, phosphorolytic 3'-5' exoribonuclease that plays an important role in tRNA 3'-end maturation. Removes nucleotide residues following the 3'-CCA terminus of tRNAs; can also add nucleotides to the ends of RNA molecules by using nucleoside diphosphates as substrates, but this may not be physiologically important. Probably plays a role in initiation of 16S rRNA degradation (leading to ribosome degradation) during starvation. The polypeptide is Ribonuclease PH (Rickettsia prowazekii (strain Madrid E)).